The primary structure comprises 586 residues: Phosphomethylpyrimidine synthase (586 aa).

Disordered stretches follow at residues 38–59 and 92–114; these read IELS…TSGP and GREI…VFPQ. Positions 92 to 102 are enriched in basic and acidic residues; it reads GREIKPEDDGV. Residues Asn-193, Met-222, Tyr-251, His-287, 307-309, 348-351, and Glu-387 contribute to the substrate site; these read SRG and DGLR. His-391 serves as a coordination point for Zn(2+). Residue Tyr-414 participates in substrate binding. His-455 lines the Zn(2+) pocket. 3 residues coordinate [4Fe-4S] cluster: Cys-535, Cys-538, and Cys-543.

This sequence belongs to the ThiC family. [4Fe-4S] cluster serves as cofactor.

It catalyses the reaction 5-amino-1-(5-phospho-beta-D-ribosyl)imidazole + S-adenosyl-L-methionine = 4-amino-2-methyl-5-(phosphooxymethyl)pyrimidine + CO + 5'-deoxyadenosine + formate + L-methionine + 3 H(+). It participates in cofactor biosynthesis; thiamine diphosphate biosynthesis. Its function is as follows. Catalyzes the synthesis of the hydroxymethylpyrimidine phosphate (HMP-P) moiety of thiamine from aminoimidazole ribotide (AIR) in a radical S-adenosyl-L-methionine (SAM)-dependent reaction. The polypeptide is Phosphomethylpyrimidine synthase (Bacillus cytotoxicus (strain DSM 22905 / CIP 110041 / 391-98 / NVH 391-98)).